We begin with the raw amino-acid sequence, 437 residues long: Epsilon-sarcoglycan (437 aa).

At 1 to 317 (MQLPRWWELG…LKSRDYYTDF (317 aa)) the chain is on the extracellular side. Asparagine 200 carries an N-linked (GlcNAc...) asparagine glycan. A helical transmembrane segment spans residues 318-338 (LITLAVPSAVALVLFLILAYI). At 339–437 (MCCRREGVEK…QQQTTGKWYP (99 aa)) the chain is on the cytoplasmic side.

The protein belongs to the sarcoglycan alpha/epsilon family. In terms of processing, N-glycosylated. Ubiquitinated, leading to its degradation by the proteasome.

The protein resides in the cell membrane. It is found in the sarcolemma. The protein localises to the cytoplasm. It localises to the cytoskeleton. Its subcellular location is the cell projection. The protein resides in the dendrite. It is found in the golgi apparatus. Its function is as follows. Component of the sarcoglycan complex, a subcomplex of the dystrophin-glycoprotein complex which forms a link between the F-actin cytoskeleton and the extracellular matrix. This chain is Epsilon-sarcoglycan, found in Macaca fascicularis (Crab-eating macaque).